Reading from the N-terminus, the 86-residue chain is Evasin-3 (86 aa).

Residues 1 to 20 (MRALLARLLLCVLVVSDSKG) form the signal peptide. 3 cysteine pairs are disulfide-bonded: Cys-42-Cys-57, Cys-46-Cys-59, and Cys-53-Cys-70. N-linked (GlcNAc...) asparagine glycosylation is present at Asn-45. Asn-76 is a glycosylation site (N-linked (GlcNAc...) asparagine).

As to quaternary structure, monomer.

It localises to the secreted. Salivary chemokine-binding protein which shows chemokine neutralizing activity and binds to host chemokines CXCL1, CXCL2, CXCL3, CXCL5, CXCL6 and CXCL8. Binds to CXCL8 with 1:1 stoichiometry. Disrupts CXCL8 homodimer formation, disrupts the glycosaminoglycan-binding site of CXCL8 and inhibits the interaction of CXCL8 with CXCR2. The sequence is that of Evasin-3 from Rhipicephalus sanguineus (Brown dog tick).